The following is a 177-amino-acid chain: Probetacellulin (177 aa).

A signal peptide spans 1 to 31 (MDPTAPGSSVSSLPLLLVLALGLAILHCVVA). Over 32–118 (DGNTTRTPET…LFYLQQDRGQ (87 aa)) the chain is Extracellular. Asn-34, Asn-42, and Asn-52 each carry an N-linked (GlcNAc...) asparagine glycan. An EGF-like domain is found at 65–105 (HFSRCPKQYKHYCIHGRCRFVVDEQTPSCICEKGYFGARCE). 3 cysteine pairs are disulfide-bonded: Cys-69/Cys-82, Cys-77/Cys-93, and Cys-95/Cys-104. The propeptide at 112-177 (LQQDRGQILV…SEDIQETNIA (66 aa)) is removed in mature form. Residues 119–139 (ILVVCLIVVMVVFIILVIGVC) traverse the membrane as a helical segment. Topologically, residues 140–177 (TCCHPLRKHRKKKKEEKMETLDKDKTPISEDIQETNIA) are cytoplasmic. A disordered region spans residues 153 to 177 (KEEKMETLDKDKTPISEDIQETNIA). Residues 154 to 167 (EEKMETLDKDKTPI) are compositionally biased toward basic and acidic residues.

In terms of assembly, monomer. Interacts with EGFR and ERBB4. Found in several mouse tissues including kidney, uterus and liver, as well as in beta tumor cell line and MCF-7 cells. It is not detected in the brain.

It localises to the secreted. The protein localises to the extracellular space. Its subcellular location is the cell membrane. Functionally, growth factor that binds to EGFR, ERBB4 and other EGF receptor family members. Potent mitogen for retinal pigment epithelial cells and vascular smooth muscle cells. The chain is Probetacellulin (Btc) from Mus musculus (Mouse).